An 85-amino-acid chain; its full sequence is Small ribosomal subunit protein uS17 (85 aa).

The protein belongs to the universal ribosomal protein uS17 family. Part of the 30S ribosomal subunit.

Its function is as follows. One of the primary rRNA binding proteins, it binds specifically to the 5'-end of 16S ribosomal RNA. This is Small ribosomal subunit protein uS17 from Anaeromyxobacter sp. (strain Fw109-5).